The sequence spans 246 residues: 3-deoxy-manno-octulosonate cytidylyltransferase (246 aa).

The protein belongs to the KdsB family.

The protein localises to the cytoplasm. The catalysed reaction is 3-deoxy-alpha-D-manno-oct-2-ulosonate + CTP = CMP-3-deoxy-beta-D-manno-octulosonate + diphosphate. It participates in nucleotide-sugar biosynthesis; CMP-3-deoxy-D-manno-octulosonate biosynthesis; CMP-3-deoxy-D-manno-octulosonate from 3-deoxy-D-manno-octulosonate and CTP: step 1/1. Its pathway is bacterial outer membrane biogenesis; lipopolysaccharide biosynthesis. In terms of biological role, activates KDO (a required 8-carbon sugar) for incorporation into bacterial lipopolysaccharide in Gram-negative bacteria. The sequence is that of 3-deoxy-manno-octulosonate cytidylyltransferase from Rickettsia felis (strain ATCC VR-1525 / URRWXCal2) (Rickettsia azadi).